The following is a 38-amino-acid chain: SFGLCRLRRGFCAHGRCRFPSIPIGRCSRFVQCCRRVW.

3 disulfides stabilise this stretch: C5–C33, C12–C27, and C17–C34.

In terms of assembly, monomer. In terms of tissue distribution, secreted into the stomach cavity.

It is found in the secreted. In terms of biological role, has antifungal activity and antibacterial activity against Gram-positive and Gram-negative bacteria. Involved in the process of food preservation in the stomach during the incubation fast. May also be present during infection. This chain is Spheniscin-1, found in Aptenodytes patagonicus (King penguin).